Consider the following 342-residue polypeptide: Ribosomal RNA small subunit methyltransferase C (342 aa).

Belongs to the methyltransferase superfamily. RsmC family. In terms of assembly, monomer.

The protein localises to the cytoplasm. It catalyses the reaction guanosine(1207) in 16S rRNA + S-adenosyl-L-methionine = N(2)-methylguanosine(1207) in 16S rRNA + S-adenosyl-L-homocysteine + H(+). Specifically methylates the guanine in position 1207 of 16S rRNA in the 30S particle. In Shewanella sp. (strain MR-7), this protein is Ribosomal RNA small subunit methyltransferase C.